The sequence spans 148 residues: uncharacterized protein (148 aa).

The protein localises to the plastid. Its subcellular location is the chloroplast. This is an uncharacterized protein from Porphyra purpurea (Red seaweed).